Consider the following 447-residue polypeptide: N-succinylarginine dihydrolase (447 aa).

Substrate is bound by residues 19–28 (AGLSFGNEAS), asparagine 110, and 137–138 (HR). The active site involves glutamate 174. Arginine 212 contacts substrate. Histidine 248 is an active-site residue. Substrate contacts are provided by aspartate 250 and asparagine 359. Catalysis depends on cysteine 365, which acts as the Nucleophile.

The protein belongs to the succinylarginine dihydrolase family. Homodimer.

The catalysed reaction is N(2)-succinyl-L-arginine + 2 H2O + 2 H(+) = N(2)-succinyl-L-ornithine + 2 NH4(+) + CO2. It functions in the pathway amino-acid degradation; L-arginine degradation via AST pathway; L-glutamate and succinate from L-arginine: step 2/5. Its function is as follows. Catalyzes the hydrolysis of N(2)-succinylarginine into N(2)-succinylornithine, ammonia and CO(2). The sequence is that of N-succinylarginine dihydrolase from Salmonella arizonae (strain ATCC BAA-731 / CDC346-86 / RSK2980).